Here is a 596-residue protein sequence, read N- to C-terminus: 3-hydroxy-3-methylglutaryl-coenzyme A reductase 1 (596 aa).

Residues 1–29 (MDVRRRPVKPLYTSKDASAGEPLKQQEVS) form a disordered region. 2 helical membrane passes run 41–61 (LYLT…FLLV) and 83–103 (AMVS…IGFV). Residues 104 to 183 (QSFVSRSNSD…SPIIMPALSE (80 aa)) are linker. Residues 184–596 (DDEEIIQSVV…YNRSIKDISK (413 aa)) are catalytic. Glutamate 278 functions as the Charge relay system in the catalytic mechanism. Asparagine 342 is a glycosylation site (N-linked (GlcNAc...) asparagine). Lysine 410 serves as the catalytic Charge relay system. N-linked (GlcNAc...) asparagine glycosylation is present at asparagine 455. The active-site Charge relay system is the aspartate 486. Histidine 584 serves as the catalytic Proton donor. Asparagine 588 is a glycosylation site (N-linked (GlcNAc...) asparagine).

This sequence belongs to the HMG-CoA reductase family. As to expression, expressed in flower primordia and anthers.

Its subcellular location is the endoplasmic reticulum membrane. It carries out the reaction (R)-mevalonate + 2 NADP(+) + CoA = (3S)-3-hydroxy-3-methylglutaryl-CoA + 2 NADPH + 2 H(+). It participates in metabolic intermediate biosynthesis; (R)-mevalonate biosynthesis; (R)-mevalonate from acetyl-CoA: step 3/3. Catalyzes the synthesis of mevalonate. The specific precursor of all isoprenoid compounds present in plants. In Solanum tuberosum (Potato), this protein is 3-hydroxy-3-methylglutaryl-coenzyme A reductase 1 (HMG1).